A 1038-amino-acid polypeptide reads, in one-letter code: Ras GTPase-activating protein 1 (1038 aa).

The residue at position 1 (methionine 1) is an N-acetylmethionine. A compositionally biased stretch (low complexity) spans 1–16; that stretch reads MMAAEAGSEEGGPATA. 2 disordered regions span residues 1-24 and 117-152; these read MMAA…AAAT and ETLG…SLDG. The segment covering 124–135 has biased composition (pro residues); the sequence is GFPPLPPPPLLP. Residues 172–263 enclose the SH2 1 domain; it reads WYHGKLDRTI…LKGEKLLYPV (92 aa). The region spanning 270 to 332 is the SH3 domain; the sequence is EDRRRVRAIL…VEDLVEEVGR (63 aa). Positions 342-432 constitute an SH2 2 domain; that stretch reads WFHGKISKQE…VEGYYLKEPV (91 aa). Positions 465–568 constitute a PH domain; the sequence is NIVKKGYLLK…WMKGLQAFCS (104 aa). The region spanning 568-681 is the C2 domain; that stretch reads SLRKSSPGTS…QKGHATDEWF (114 aa). Tyrosine 606 is subject to Phosphotyrosine. A Ras-GAP domain is found at 755-965; sequence KLESLLLCTL…HRMIMFLDEL (211 aa). Serine 822 is modified (phosphoserine).

In terms of assembly, interacts with SQSTM1. Interacts with SPSB1; the interaction does not promote degradation. Interacts with CAV2 (tyrosine phosphorylated form). Directly interacts with NCK1. Interacts with PDGFRB (tyrosine phosphorylated). Interacts (via SH2 domain) with the 'Tyr-9' phosphorylated form of PDPK1. Interacts with tyrosine-phosphorylated EPHB4. Phosphorylated by SRC and LCK. The phosphorylation SRC inhibits its ability to stimulate the Ras-GTPase activity, whereas phosphorylation by LCK does not display any effect on stimulation activity.

The protein localises to the cytoplasm. In terms of biological role, inhibitory regulator of the Ras-cyclic AMP pathway. Stimulates the GTPase of normal but not oncogenic Ras p21. This is Ras GTPase-activating protein 1 (Rasa1) from Rattus norvegicus (Rat).